The chain runs to 286 residues: Divergent deoxyribose-phosphate aldolase-like protein (286 aa).

As to quaternary structure, homodimer. Interacts with ADF; the interaction enhances ADF activity in disassembly of filamentous actin and inhibition of actin polymerization.

It is found in the cytoplasm. Its function is as follows. Involved in regulation of actin dynamics. The sequence is that of Divergent deoxyribose-phosphate aldolase-like protein from Toxoplasma gondii.